The primary structure comprises 491 residues: MKLQFKPVYLASIAIMAIGCTKEVTENDTSEISEVPTELRAAASSFYTPPGQNVRANKKNLVTDYGVNHNDQNDDSSKLNLAIKDLSDTGGILTLPKGKYYLTKIRMRSNVHLEIEKGTVIYPTKGLTPAKNHRIFDFASKTEEKIENASIVGKGGKFIVDLRGNSSKNQIVADVGNVTNFKISNFTIKDEKTIFASILVSFTDKAGNAWPHKGIIENIDQANAHTGYGLIQAYAADNILFNNLSCTGGVTLRLETDNLAMKTAKKGGVRDIFATKIKNTNGLTPVMFSPHFMENGKVTIDDVTAIGCAYAVRVEHGFIEIFDKGNRASADAFKNYIEGILGAGSVEVVYKRNNGRTWAARIANDFNEAAYNHSNPAVSGIKPGKFATSKVTNVKATYKGTGAKLKQAFLSYLPCSERSKVCRPGPDGFEYNGPSLGVTIDNTKRDNSLGNYNVNVSTSSVQGFPNNYVLNVKYNTPKVCNQNLGSITSCN.

The signal sequence occupies residues 1-19 (MKLQFKPVYLASIAIMAIG). An intrachain disulfide couples C422 to C490.

This sequence belongs to the glycosyl hydrolase 82 family.

It localises to the secreted. It carries out the reaction Endohydrolysis of 1,4-beta-D-linkages between D-galactose 4-sulfate and 3,6-anhydro-D-galactose-2-sulfate in iota-carrageenans.. Functionally, hydrolyzes iota-carrageenans, sulfated 1,3-alpha-1,4-beta galactans from red algal cell walls, with an inversion of anomeric configuration. Also active against hybrid iota-/nu-carrageenan, not active against kappa- or lambda-carrageenans. The polypeptide is Iota-carrageenase (Zobellia galactanivorans (strain DSM 12802 / CCUG 47099 / CIP 106680 / NCIMB 13871 / Dsij)).